The sequence spans 234 residues: Interleukin-34 (234 aa).

Residues M1–G20 form the signal peptide. N-linked (GlcNAc...) asparagine glycosylation occurs at N99. The disordered stretch occupies residues P215–P234. Residues L222–P234 show a composition bias toward polar residues.

Belongs to the IL-34 family. Homodimer. Interacts with CSF1R.

It localises to the secreted. In terms of biological role, cytokine that promotes the proliferation, survival and differentiation of monocytes and macrophages. Promotes the release of pro-inflammatory chemokines, and thereby plays an important role in innate immunity and in inflammatory processes. Plays an important role in the regulation of osteoclast proliferation and differentiation, and in the regulation of bone resorption. Signaling via CSF1R and its downstream effectors stimulates phosphorylation of MAPK1/ERK2 AND MAPK3/ERK1. This is Interleukin-34 (Il34) from Rattus norvegicus (Rat).